The following is a 416-amino-acid chain: Iron-regulated transcriptional activator AFT2 (416 aa).

Asp-53 is a Zn(2+) binding site. DNA contacts are provided by Arg-54, His-55, Lys-58, Ile-74, Glu-75, Arg-76, Ser-77, Asp-78, and Lys-81. Zn(2+) is bound at residue His-55. Cys-86 contributes to the Zn(2+) binding site. Ser-88 lines the DNA pocket. Position 109 (Cys-109) interacts with Zn(2+). DNA contacts are provided by Val-119 and Arg-120. Positions 133 and 135 each coordinate Zn(2+). Positions 157 and 159 each coordinate DNA. A CDC [2Fe-2S] cluster binding motif motif is present at residues 187-189 (CDC).

In terms of assembly, homodimer. Dimerization decreases the DNA-binding activity.

Its subcellular location is the nucleus. Dimerization via the binding of Fe(2+) or a [2Fe-2S] cluster decreases the DNA-binding activity. Transcription factor required for iron homeostasis and resistance to oxidative stress. With AFT1, activates the gene expression in response to low-iron conditions, also called iron regulon. Recognizes the consensus iron-responsive element (Fe-RE) sequence 5'-CACCC-3' in the promoters of target genes. The transcription activation by AFT1 and AFT2 depends on the mitochondrial iron-sulfur protein biosynthesis pathway. In high iron condition, the presence of iron leads to dimerization, which in turn leads to a decrease in DNA affinity. The protein is Iron-regulated transcriptional activator AFT2 of Saccharomyces cerevisiae (strain ATCC 204508 / S288c) (Baker's yeast).